Here is a 547-residue protein sequence, read N- to C-terminus: MFS-type transporter ungB (547 aa).

14 consecutive transmembrane segments (helical) span residues 14–34 (LLVT…ETVL), 50–70 (DVGW…MAWG), 80–100 (WVFL…GVSP), 111–131 (IAGL…SNTI), 138–158 (IYLG…PVIG), 169–189 (WCFF…VFCL), 210–230 (LLGS…LEWG), 238–258 (SWRV…FAVV), 279–299 (LGLI…VYYL), 316–336 (LAIL…GILV), 343–363 (TPFL…LSSL), 366–386 (ASGL…IGLG), 392–412 (VVPS…TLCF), and 475–495 (AVSE…LGSA). Residues 503 to 547 (PGHKEATEKVEGEGQGQGQQQEQDQGQGWGEVGESHALAHPTADK) are disordered. The span at 504–514 (GHKEATEKVEG) shows a compositional bias: basic and acidic residues.

The protein belongs to the major facilitator superfamily. TCR/Tet family.

The protein localises to the membrane. In terms of biological role, MFS-type transporter; part of the gene cluster that mediates the biosynthesis of the unguisins, gamma-aminobutyric acid (GABA)-containing fungal cyclic heptapeptides with the amino acid sequence cyclo-(D-Ala1-D-Val2-L-Phe3-D-Val4-D-Ala5-D-Trp6-GABA7) for unguisin A and cyclo-(D-Ala1-D-Val2-L-Leu3-D-Val4-D-Ala5-D-Trp6-GABA7) for unguisin B. May be involved in the secretion of unguisins. In Aspergillus violaceofuscus (strain CBS 115571), this protein is MFS-type transporter ungB.